The chain runs to 266 residues: MKEELFKEKSRYITGVVLIVVAGLILYADNLLLFWAVLGGIYAVGFFEALRLFQVKASFSLYLILVLSWVAAYFNGHPVECALISAMVMASVIAYQKAHHSEAILPFLYPGVGFFALFGVYKDFGAVAIIWLLVVVVASDVGAFFGGKLLGKTPFTATSPNKTLEGALIGVVLASVLGSFVGMGKLSGGFLMALLFSFLIALMAVFGDLYESYLKRKVGVKDSGKILPGHGGVLDRLDSMLFGALSLHVLLYFLEIWKETAVFLGD.

The next 8 membrane-spanning stretches (helical) occupy residues 16–36 (VVLI…LFWA), 52–72 (LFQV…WVAA), 78–98 (PVEC…YQKA), 101–121 (SEAI…FGVY), 125–145 (GAVA…GAFF), 164–184 (LEGA…VGMG), 186–206 (LSGG…MAVF), and 237–257 (LDSM…LEIW).

The protein belongs to the CDS family.

The protein resides in the cell inner membrane. The enzyme catalyses a 1,2-diacyl-sn-glycero-3-phosphate + CTP + H(+) = a CDP-1,2-diacyl-sn-glycerol + diphosphate. It functions in the pathway phospholipid metabolism; CDP-diacylglycerol biosynthesis; CDP-diacylglycerol from sn-glycerol 3-phosphate: step 3/3. In Helicobacter pylori (strain J99 / ATCC 700824) (Campylobacter pylori J99), this protein is Phosphatidate cytidylyltransferase (cdsA).